Consider the following 163-residue polypeptide: Large ribosomal subunit protein uL15 (163 aa).

The protein belongs to the universal ribosomal protein uL15 family. In terms of assembly, part of the 50S ribosomal subunit.

In terms of biological role, binds to the 23S rRNA. In Orientia tsutsugamushi (strain Ikeda) (Rickettsia tsutsugamushi), this protein is Large ribosomal subunit protein uL15.